The sequence spans 348 residues: Rhodopsin (348 aa).

At 1–33 (TEGPFFYIPMVNTSGVVRSPYEYPQYYLVNPAA) the chain is on the extracellular side. Asn12 is a glycosylation site (N-linked (GlcNAc...) asparagine). A helical transmembrane segment spans residues 34–58 (YAILGAYMFFLIIIGFPVNFMTLYV). The Cytoplasmic portion of the chain corresponds to 59–70 (TLEHKKLRTPLN). A helical membrane pass occupies residues 71-93 (YILLNLAVADLFMVIGGFTTTMY). The Extracellular portion of the chain corresponds to 94-107 (SSMHGYFVLGRLGC). Cys107 and Cys184 are disulfide-bonded. The chain crosses the membrane as a helical span at residues 108–130 (NMEGFSATLGGMISLWSLAVLAI). Positions 131 to 133 (ERW) match the 'Ionic lock' involved in activated form stabilization motif. Topologically, residues 131–149 (ERWVVVCKPISNFRFGENH) are cytoplasmic. The chain crosses the membrane as a helical span at residues 150–170 (AIMGVSLTWFMALACTVPPLV). At 171–199 (GWSRYIPEGMQCSCGIDYYTRAEGFNNES) the chain is on the extracellular side. Residue Asn197 is glycosylated (N-linked (GlcNAc...) asparagine). The chain crosses the membrane as a helical span at residues 200–221 (FVLYMFFCHFLVPLVIIFFCYG). Residues 222-249 (RLLCAVKEAAAAQQESETTQRAEREVTR) are Cytoplasmic-facing. A helical transmembrane segment spans residues 250–271 (MVIIMVIGFLVCWLPYASVAWF). The Extracellular portion of the chain corresponds to 272–283 (IFTHQGSEFGPL). A helical membrane pass occupies residues 284 to 305 (FMTIPAFFAKSSSIYNPMIYIC). Lys293 carries the post-translational modification N6-(retinylidene)lysine. Topologically, residues 306–348 (MNKQFRNCMITTLFCGKNPFEGEEEGASSTKTEASSASSVSPA) are cytoplasmic. Cys320 carries the S-palmitoyl cysteine lipid modification. The segment at 327 to 348 (GEEEGASSTKTEASSASSVSPA) is disordered. Low complexity predominate over residues 332–348 (ASSTKTEASSASSVSPA).

Belongs to the G-protein coupled receptor 1 family. Opsin subfamily. Phosphorylated on some or all of the serine and threonine residues present in the C-terminal region. Post-translationally, contains one covalently linked retinal chromophore.

The protein localises to the membrane. It is found in the cell projection. It localises to the cilium. The protein resides in the photoreceptor outer segment. Its function is as follows. Photoreceptor required for image-forming vision at low light intensity. While most salt water fish species use retinal as chromophore, most freshwater fish use 3-dehydroretinal, or a mixture of retinal and 3-dehydroretinal. Light-induced isomerization of 11-cis to all-trans retinal triggers a conformational change that activates signaling via G-proteins. Subsequent receptor phosphorylation mediates displacement of the bound G-protein alpha subunit by arrestin and terminates signaling. This is Rhodopsin (rho) from Sargocentron punctatissimum (Speckled squirrelfish).